The chain runs to 611 residues: Dual specificity protein phosphatase CDC14AB (611 aa).

Residues 23-178 (DLLGASEFIK…ALQHGFLNFE (156 aa)) form an a region. Residues 179 to 192 (TFDVNEYEHYERVE) are linker. Residues 193–359 (NGDLNWITPG…HGDSLRSKQR (167 aa)) are b. The Tyrosine-protein phosphatase domain maps to 194-352 (GDLNWITPGK…KQASLWAHGD (159 aa)). The active-site Phosphocysteine intermediate is the Cys-294. Positions 408 to 611 (KLRALKGRRQ…PSLQSEYVQY (204 aa)) are disordered. The span at 456-490 (SPLKSSKVPASSSSSSSSSSVSASAKRIGRSSSSS) shows a compositional bias: low complexity. The segment covering 491–511 (TNLKSTRLASSLGNLYEPNTE) has biased composition (polar residues). Over residues 512–553 (SISSGKPPSPSSFTPHPVRTTYNYHYEVNNNNNQYSTTSSPS) the composition is skewed to low complexity. Composition is skewed to polar residues over residues 554–569 (KSLG…SGAS) and 591–611 (GLST…YVQY).

It belongs to the protein-tyrosine phosphatase family. Non-receptor class CDC14 subfamily.

The protein localises to the nucleus. The protein resides in the cytoplasm. It is found in the cytoskeleton. It localises to the microtubule organizing center. Its subcellular location is the centrosome. The protein localises to the spindle pole. The protein resides in the spindle. It is found in the cell projection. It localises to the kinocilium. The enzyme catalyses O-phospho-L-tyrosyl-[protein] + H2O = L-tyrosyl-[protein] + phosphate. It carries out the reaction O-phospho-L-seryl-[protein] + H2O = L-seryl-[protein] + phosphate. It catalyses the reaction O-phospho-L-threonyl-[protein] + H2O = L-threonyl-[protein] + phosphate. Its function is as follows. Dual-specificity phosphatase. Required for centrosome separation and productive cytokinesis during cell division. Dephosphorylates SIRT2 around early anaphase. May dephosphorylate the APC subunit FZR1/CDH1, thereby promoting APC-FZR1 dependent degradation of mitotic cyclins and subsequent exit from mitosis. This chain is Dual specificity protein phosphatase CDC14AB (cdc14ab), found in Danio rerio (Zebrafish).